A 440-amino-acid polypeptide reads, in one-letter code: Exodeoxyribonuclease 7 large subunit (440 aa).

It belongs to the XseA family. As to quaternary structure, heterooligomer composed of large and small subunits.

The protein resides in the cytoplasm. It catalyses the reaction Exonucleolytic cleavage in either 5'- to 3'- or 3'- to 5'-direction to yield nucleoside 5'-phosphates.. In terms of biological role, bidirectionally degrades single-stranded DNA into large acid-insoluble oligonucleotides, which are then degraded further into small acid-soluble oligonucleotides. This chain is Exodeoxyribonuclease 7 large subunit, found in Ralstonia nicotianae (strain ATCC BAA-1114 / GMI1000) (Ralstonia solanacearum).